The chain runs to 478 residues: Protein nucleotidyltransferase YdiU (478 aa).

8 residues coordinate ATP: Gly-84, Gly-86, Arg-87, Lys-107, Asp-119, Gly-120, Arg-170, and Arg-177. Residue Asp-246 is the Proton acceptor of the active site. Residues Asn-247 and Asp-256 each coordinate Mg(2+). Asp-256 is a binding site for ATP.

The protein belongs to the SELO family. Requires Mg(2+) as cofactor. Mn(2+) serves as cofactor.

The catalysed reaction is L-seryl-[protein] + ATP = 3-O-(5'-adenylyl)-L-seryl-[protein] + diphosphate. The enzyme catalyses L-threonyl-[protein] + ATP = 3-O-(5'-adenylyl)-L-threonyl-[protein] + diphosphate. It carries out the reaction L-tyrosyl-[protein] + ATP = O-(5'-adenylyl)-L-tyrosyl-[protein] + diphosphate. It catalyses the reaction L-histidyl-[protein] + UTP = N(tele)-(5'-uridylyl)-L-histidyl-[protein] + diphosphate. The catalysed reaction is L-seryl-[protein] + UTP = O-(5'-uridylyl)-L-seryl-[protein] + diphosphate. The enzyme catalyses L-tyrosyl-[protein] + UTP = O-(5'-uridylyl)-L-tyrosyl-[protein] + diphosphate. Its function is as follows. Nucleotidyltransferase involved in the post-translational modification of proteins. It can catalyze the addition of adenosine monophosphate (AMP) or uridine monophosphate (UMP) to a protein, resulting in modifications known as AMPylation and UMPylation. This chain is Protein nucleotidyltransferase YdiU, found in Escherichia coli O127:H6 (strain E2348/69 / EPEC).